The primary structure comprises 190 residues: Carbonic anhydrase 2 (190 aa).

This sequence belongs to the beta-class carbonic anhydrase family. Homohexamer.

The protein localises to the cytoplasm. The enzyme catalyses hydrogencarbonate + H(+) = CO2 + H2O. Its function is as follows. Reversible hydration of carbon dioxide. The protein is Carbonic anhydrase 2 of Flaveria linearis (Narrowleaf yellowtops).